Here is a 179-residue protein sequence, read N- to C-terminus: Large ribosomal subunit protein uL6 (179 aa).

This sequence belongs to the universal ribosomal protein uL6 family. Part of the 50S ribosomal subunit.

This protein binds to the 23S rRNA, and is important in its secondary structure. It is located near the subunit interface in the base of the L7/L12 stalk, and near the tRNA binding site of the peptidyltransferase center. The protein is Large ribosomal subunit protein uL6 of Rippkaea orientalis (strain PCC 8801 / RF-1) (Cyanothece sp. (strain PCC 8801)).